Here is a 282-residue protein sequence, read N- to C-terminus: Acetyl-coenzyme A carboxylase carboxyl transferase subunit beta (282 aa).

The CoA carboxyltransferase N-terminal domain occupies 26 to 282 (QWVKCPETGE…IIRLLNLLME (257 aa)).

This sequence belongs to the AccD/PCCB family. Acetyl-CoA carboxylase is a heterohexamer composed of biotin carboxyl carrier protein (AccB), biotin carboxylase (AccC) and two subunits each of ACCase subunit alpha (AccA) and ACCase subunit beta (AccD).

The protein resides in the cytoplasm. The catalysed reaction is N(6)-carboxybiotinyl-L-lysyl-[protein] + acetyl-CoA = N(6)-biotinyl-L-lysyl-[protein] + malonyl-CoA. The protein operates within lipid metabolism; malonyl-CoA biosynthesis; malonyl-CoA from acetyl-CoA: step 1/1. Component of the acetyl coenzyme A carboxylase (ACC) complex. Biotin carboxylase (BC) catalyzes the carboxylation of biotin on its carrier protein (BCCP) and then the CO(2) group is transferred by the transcarboxylase to acetyl-CoA to form malonyl-CoA. The sequence is that of Acetyl-coenzyme A carboxylase carboxyl transferase subunit beta from Salinibacter ruber (strain DSM 13855 / M31).